Here is a 344-residue protein sequence, read N- to C-terminus: Dihydroorotate dehydrogenase (quinone) (344 aa).

Residues 65 to 69 (AGLDK) and Thr89 contribute to the FMN site. Lys69 contacts substrate. Residue 114-118 (NRMGF) coordinates substrate. FMN-binding residues include Asn142 and Asn175. Position 175 (Asn175) interacts with substrate. The Nucleophile role is filled by Ser178. Asn180 serves as a coordination point for substrate. Positions 220 and 248 each coordinate FMN. 249–250 (NT) provides a ligand contact to substrate. FMN contacts are provided by residues Gly271, Gly300, and 321-322 (YT).

This sequence belongs to the dihydroorotate dehydrogenase family. Type 2 subfamily. As to quaternary structure, monomer. FMN is required as a cofactor.

It is found in the cell membrane. It catalyses the reaction (S)-dihydroorotate + a quinone = orotate + a quinol. It functions in the pathway pyrimidine metabolism; UMP biosynthesis via de novo pathway; orotate from (S)-dihydroorotate (quinone route): step 1/1. Catalyzes the conversion of dihydroorotate to orotate with quinone as electron acceptor. In Paraburkholderia phymatum (strain DSM 17167 / CIP 108236 / LMG 21445 / STM815) (Burkholderia phymatum), this protein is Dihydroorotate dehydrogenase (quinone).